We begin with the raw amino-acid sequence, 440 residues long: 3-phosphoshikimate 1-carboxyvinyltransferase (440 aa).

Lysine 19, serine 20, and arginine 24 together coordinate 3-phosphoshikimate. Lysine 19 lines the phosphoenolpyruvate pocket. Residues glycine 92 and arginine 121 each contribute to the phosphoenolpyruvate site. Residues serine 166, glutamine 168, aspartate 315, and lysine 342 each coordinate 3-phosphoshikimate. Residue glutamine 168 coordinates phosphoenolpyruvate. Residue aspartate 315 is the Proton acceptor of the active site. Phosphoenolpyruvate contacts are provided by arginine 346 and arginine 399.

Belongs to the EPSP synthase family. In terms of assembly, monomer.

The protein localises to the cytoplasm. The catalysed reaction is 3-phosphoshikimate + phosphoenolpyruvate = 5-O-(1-carboxyvinyl)-3-phosphoshikimate + phosphate. The protein operates within metabolic intermediate biosynthesis; chorismate biosynthesis; chorismate from D-erythrose 4-phosphate and phosphoenolpyruvate: step 6/7. Catalyzes the transfer of the enolpyruvyl moiety of phosphoenolpyruvate (PEP) to the 5-hydroxyl of shikimate-3-phosphate (S3P) to produce enolpyruvyl shikimate-3-phosphate and inorganic phosphate. This is 3-phosphoshikimate 1-carboxyvinyltransferase from Leptospira borgpetersenii serovar Hardjo-bovis (strain JB197).